A 518-amino-acid chain; its full sequence is Protein nucleotidyltransferase YdiU (518 aa).

Residues 1-10 show a composition bias toward basic and acidic residues; sequence MTHLHFDNRL. The disordered stretch occupies residues 1–25; sequence MTHLHFDNRLRQQLPGDPEEGARRR. 8 residues coordinate ATP: G100, G102, R103, K123, D135, G136, R193, and R200. D270 serves as the catalytic Proton acceptor. Positions 271 and 280 each coordinate Mg(2+). D280 contacts ATP.

This sequence belongs to the SELO family. The cofactor is Mg(2+). It depends on Mn(2+) as a cofactor.

The enzyme catalyses L-seryl-[protein] + ATP = 3-O-(5'-adenylyl)-L-seryl-[protein] + diphosphate. The catalysed reaction is L-threonyl-[protein] + ATP = 3-O-(5'-adenylyl)-L-threonyl-[protein] + diphosphate. It carries out the reaction L-tyrosyl-[protein] + ATP = O-(5'-adenylyl)-L-tyrosyl-[protein] + diphosphate. It catalyses the reaction L-histidyl-[protein] + UTP = N(tele)-(5'-uridylyl)-L-histidyl-[protein] + diphosphate. The enzyme catalyses L-seryl-[protein] + UTP = O-(5'-uridylyl)-L-seryl-[protein] + diphosphate. The catalysed reaction is L-tyrosyl-[protein] + UTP = O-(5'-uridylyl)-L-tyrosyl-[protein] + diphosphate. Its function is as follows. Nucleotidyltransferase involved in the post-translational modification of proteins. It can catalyze the addition of adenosine monophosphate (AMP) or uridine monophosphate (UMP) to a protein, resulting in modifications known as AMPylation and UMPylation. The protein is Protein nucleotidyltransferase YdiU of Xanthomonas euvesicatoria pv. vesicatoria (strain 85-10) (Xanthomonas campestris pv. vesicatoria).